A 447-amino-acid polypeptide reads, in one-letter code: uncharacterized protein (447 aa).

Disordered regions lie at residues 1 to 80, 115 to 184, and 295 to 322; these read MTFE…EQSS, ATTQ…PNNP, and LQDNASLTSQGSNLSSQNSGLSSSSSGI. Residues 11 to 32 show a composition bias toward basic and acidic residues; it reads QRRDESAYRLGEEDGRQKGESS. Residues 42–51 are compositionally biased toward polar residues; it reads KNPSNVSFWS. Over residues 61–72 the composition is skewed to basic and acidic residues; it reads VKTDRPQFHRAD. The span at 115 to 158 shows a compositional bias: polar residues; it reads ATTQSSPISTSFNPQLPSNSNTNRFDFGSESQLSSNYTNDTGLS. The segment covering 300–321 has biased composition (low complexity); sequence SLTSQGSNLSSQNSGLSSSSSG. Transmembrane regions (helical) follow at residues 385-405 and 424-444; these read FMFLFTFGIVFPPLWILASFL and IINRVVACLGVAITFLFIGLG.

Its subcellular location is the membrane. This is an uncharacterized protein from Schizosaccharomyces pombe (strain 972 / ATCC 24843) (Fission yeast).